The sequence spans 67 residues: ATP synthase F(0) complex subunit 8 (67 aa).

A helical membrane pass occupies residues 8-24 (TWFIMIFSMFLTLFILF). An N6-acetyllysine; alternate modification is found at Lys-54. At Lys-54 the chain carries N6-succinyllysine; alternate. The residue at position 57 (Lys-57) is an N6-acetyllysine.

It belongs to the ATPase protein 8 family. As to quaternary structure, component of the ATP synthase complex composed at least of ATP5F1A/subunit alpha, ATP5F1B/subunit beta, ATP5MC1/subunit c (homooctomer), MT-ATP6/subunit a, MT-ATP8/subunit 8, ATP5ME/subunit e, ATP5MF/subunit f, ATP5MG/subunit g, ATP5MK/subunit k, ATP5MJ/subunit j, ATP5F1C/subunit gamma, ATP5F1D/subunit delta, ATP5F1E/subunit epsilon, ATP5PF/subunit F6, ATP5PB/subunit b, ATP5PD/subunit d, ATP5PO/subunit OSCP. ATP synthase complex consists of a soluble F(1) head domain (subunits alpha(3) and beta(3)) - the catalytic core - and a membrane F(0) domain - the membrane proton channel (subunits c, a, 8, e, f, g, k and j). These two domains are linked by a central stalk (subunits gamma, delta, and epsilon) rotating inside the F1 region and a stationary peripheral stalk (subunits F6, b, d, and OSCP). Interacts with PRICKLE3.

The protein resides in the mitochondrion membrane. Functionally, subunit 8, of the mitochondrial membrane ATP synthase complex (F(1)F(0) ATP synthase or Complex V) that produces ATP from ADP in the presence of a proton gradient across the membrane which is generated by electron transport complexes of the respiratory chain. ATP synthase complex consist of a soluble F(1) head domain - the catalytic core - and a membrane F(1) domain - the membrane proton channel. These two domains are linked by a central stalk rotating inside the F(1) region and a stationary peripheral stalk. During catalysis, ATP synthesis in the catalytic domain of F(1) is coupled via a rotary mechanism of the central stalk subunits to proton translocation. In vivo, can only synthesize ATP although its ATP hydrolase activity can be activated artificially in vitro. Part of the complex F(0) domain. The polypeptide is ATP synthase F(0) complex subunit 8 (Canis lupus familiaris (Dog)).